Reading from the N-terminus, the 62-residue chain is Ponericin-W-like 32.2 (62 aa).

The first 23 residues, methionine 1–alanine 23, serve as a signal peptide directing secretion. Positions arginine 49–proline 62 are excised as a propeptide.

Belongs to the non-disulfide-bridged peptide (NDBP) superfamily. Medium-length antimicrobial peptide (group 3) family. Ponericin-W subfamily. As to expression, expressed by the venom gland.

It is found in the secreted. The protein localises to the target cell membrane. Its function is as follows. Antimicrobial peptide with potent activity against a range of Gram-positive and Gram-negative bacteria. Has high hemolytic activity against erythrocytes. May act by disrupting the integrity of the bacterial cell membrane. This chain is Ponericin-W-like 32.2, found in Lychas mucronatus (Chinese swimming scorpion).